The sequence spans 308 residues: Methionyl-tRNA formyltransferase (308 aa).

Position 111-114 (111-114) interacts with (6S)-5,6,7,8-tetrahydrofolate; the sequence is SLLP.

Belongs to the Fmt family.

The enzyme catalyses L-methionyl-tRNA(fMet) + (6R)-10-formyltetrahydrofolate = N-formyl-L-methionyl-tRNA(fMet) + (6S)-5,6,7,8-tetrahydrofolate + H(+). In terms of biological role, attaches a formyl group to the free amino group of methionyl-tRNA(fMet). The formyl group appears to play a dual role in the initiator identity of N-formylmethionyl-tRNA by promoting its recognition by IF2 and preventing the misappropriation of this tRNA by the elongation apparatus. The chain is Methionyl-tRNA formyltransferase from Thermodesulfovibrio yellowstonii (strain ATCC 51303 / DSM 11347 / YP87).